The sequence spans 497 residues: MAVAKTEMLVSPLQISDPFSSFPHSPTMDNYPKLEEMMLLNAGGPQFLGASVPDGSGFNSTVEGAEQFDHLTADAFSEMSLSSEKALVESSYANQTTRLPSLTYTGRFSLEPATNSSNTLWPEPLFSLVSGLVGMANISPSSAPSSSPSSSSSSSSSQSPPLSCSVQSNDSSPIYSAAPTFPNSSSEIFPDHSPQPFQNASIPYPPPAYPVSKTTFQVPMIPDYLFPQQQGDVSLVSADQKPFQAMESRTQQPSLTPLSTIKAYATHTSQDLKTINSTYQSQIIKPSRMRKYPNRPSKTPPHERPYGCPVESCDRRFSRSDELTRHIRIHTGQKPFQCRICMRNFSRSDHLTTHIRTHTGEKPFACDICGRKFARSDERKRHTKIHLRQKDKKADKATPVSVASPVSSYSPSASTSYPSPVPTSYSSPVSSSYPSPVHSSFPSPTTAVTYPSVTSTFQTHGITSFPSSIMTNAFSSPMSSALSDMSLTYSPRTIEIC.

The span at 139 to 165 (SPSSAPSSSPSSSSSSSSSQSPPLSCS) shows a compositional bias: low complexity. Disordered regions lie at residues 139–169 (SPSS…VQSN), 175–194 (YSAA…DHSP), and 286–309 (PSRM…YGCP). 3 consecutive C2H2-type zinc fingers follow at residues 306-330 (YGCP…IRIH), 336-358 (FQCR…IRTH), and 364-386 (FACD…TKIH). The interval 377–441 (DERKRHTKIH…SYPSPVHSSF (65 aa)) is disordered. Positions 381 to 391 (RHTKIHLRQKD) are enriched in basic residues. A compositionally biased stretch (low complexity) spans 397–441 (ATPVSVASPVSSYSPSASTSYPSPVPTSYSSPVSSSYPSPVHSSF).

The protein belongs to the EGR C2H2-type zinc-finger protein family. Expressed in the presumptive mesoderm. In blastula embryos, expressed in the dorsal marginal zone, and at the onset of gastrulation expression is specific to the Spemann organizer. As gastrulation proceeds, expressed in a ring around the yolk plug. This expression is maintained in advanced gastrulae, with weak expression also extending into the dorsal midline. By the neurula stage, expression is excluded from the notochord. In late tailbud stages, expressed in two spots in the anterior forebrain, which are connected via a bridge of cells that also show expression.

The protein localises to the nucleus. The protein resides in the cytoplasm. Transcriptional regulator. Recognizes and binds to the DNA sequence 5'-GCG(T/G)GGGCG-3'(EGR-site) in the promoter region of target genes. Binds double-stranded target DNA, irrespective of the cytosine methylation status. Regulates the transcription of numerous target genes, and thereby plays an important role in regulating the response to growth factors, DNA damage, and ischemia. Plays a role in the regulation of cell survival, proliferation and cell death. Mediates responses to ischemia and hypoxia; regulates the expression of proteins that are involved in inflammatory processes. Plays a role in regulating the expression of circadian clock genes. The protein is Early growth response protein 1-A (egr1-a) of Xenopus laevis (African clawed frog).